The sequence spans 429 residues: Glutamate-1-semialdehyde 2,1-aminomutase 2 (429 aa).

Lys267 is modified (N6-(pyridoxal phosphate)lysine).

Belongs to the class-III pyridoxal-phosphate-dependent aminotransferase family. HemL subfamily. In terms of assembly, homodimer. Pyridoxal 5'-phosphate is required as a cofactor.

Its subcellular location is the cytoplasm. The catalysed reaction is (S)-4-amino-5-oxopentanoate = 5-aminolevulinate. Its pathway is porphyrin-containing compound metabolism; protoporphyrin-IX biosynthesis; 5-aminolevulinate from L-glutamyl-tRNA(Glu): step 2/2. The chain is Glutamate-1-semialdehyde 2,1-aminomutase 2 (gsaB) from Bacillus subtilis (strain 168).